A 255-amino-acid polypeptide reads, in one-letter code: NADPH-dependent FMN reductase ArsH (255 aa).

43–50 (SLRARSFS) is an FMN binding site.

This sequence belongs to the ArsH family. Homotetramer. Requires FMN as cofactor.

Functionally, has NADPH-dependent FMN reductase activity and very low azoreductase activity. No activity with NADH. The polypeptide is NADPH-dependent FMN reductase ArsH (Shigella flexneri).